The following is a 436-amino-acid chain: Alpha-2 adrenergic receptor (436 aa).

Over 1–27 (MDVTQSNATKDDANITVTPWPYTETAA) the chain is Extracellular. N-linked (GlcNAc...) asparagine glycosylation is found at asparagine 7 and asparagine 14. Residues 28-52 (AFIILVVSVIILVSIVGNVLVIVAV) form a helical membrane-spanning segment. Topologically, residues 53–64 (LTSRALRAPQNL) are cytoplasmic. Residues 65–90 (FLVSLACADILVATLVIPFSLANEIM) form a helical membrane-spanning segment. Residues 91–100 (GYWFFGSTWC) lie on the Extracellular side of the membrane. A disulfide bond links cysteine 100 and cysteine 173. The chain crosses the membrane as a helical span at residues 101 to 123 (AFYLALDVLFCTSSIVHLCAISL). The Cytoplasmic portion of the chain corresponds to 124 to 144 (DRYWSVTKAVSYNLKRTPKRI). The chain crosses the membrane as a helical span at residues 145–167 (KSMIAVVWVISAVISFPPLIMTK). Residues 168-178 (HDEKECLINDE) are Extracellular-facing. The helical transmembrane segment at 179 to 202 (TWYILSSSLVSFFAPGFIMITVYC) threads the bilayer. Residues 203-329 (KIYRVAKQRS…QMREKRFTFV (127 aa)) are Cytoplasmic-facing. Residues 238 to 280 (KFEKESPSSNSSESNQRQEELDDIDLEESATSDNKPKSSRFSN) are disordered. Over residues 257–267 (ELDDIDLEESA) the composition is skewed to acidic residues. The chain crosses the membrane as a helical span at residues 330–353 (LTVVMGVFVLCWFPFFFTYSLHAI). Residues 354–366 (CGDSCEPPEALFK) lie on the Extracellular side of the membrane. Residues 367–387 (LFFWIGYCNSSVNPIIYTIFN) traverse the membrane as a helical segment. Residues 388 to 436 (RDFRKAFKKICLLDCAAHLRDSCLGTLGRLNAKCIFECHQKSNQEETAN) lie on the Cytoplasmic side of the membrane.

Belongs to the G-protein coupled receptor 1 family.

The protein resides in the cell membrane. Alpha-2 adrenergic receptors mediate the catecholamine-induced inhibition of adenylate cyclase through the action of G proteins. The sequence is that of Alpha-2 adrenergic receptor from Carassius auratus (Goldfish).